A 726-amino-acid polypeptide reads, in one-letter code: Prolyl endopeptidase-like (726 aa).

Ser-138 carries the post-translational modification Phosphoserine. Catalysis depends on charge relay system residues Ser-558, Asp-644, and His-689.

The protein belongs to the peptidase S9A family. As to quaternary structure, homodimer. Interacts with the AP-1 complex.

It localises to the cytoplasm. It is found in the cytosol. Its subcellular location is the golgi apparatus. The protein localises to the trans-Golgi network. The protein resides in the cytoskeleton. It localises to the nucleus. In terms of biological role, serine peptidase whose precise substrate specificity remains unclear. Does not cleave peptides after a arginine or lysine residue. Regulates trans-Golgi network morphology and sorting by regulating the membrane binding of the AP-1 complex. May play a role in the regulation of synaptic vesicle exocytosis. The polypeptide is Prolyl endopeptidase-like (Prepl) (Rattus norvegicus (Rat)).